A 789-amino-acid chain; its full sequence is UPF0313 protein VC_1711 (789 aa).

In terms of domain architecture, Radical SAM core spans 363 to 642; sequence AYDMIKTSVN…KALLRYHDPA (280 aa). Residues Cys377, Cys381, and Cys384 each coordinate [4Fe-4S] cluster. Positions 669 to 789 are disordered; sequence PEKDSDLVTP…NTQRQPQRAR (121 aa). Over residues 683–698 the composition is skewed to basic residues; it reads KSGRHGANRFATKHTH. Polar residues-rich tracts occupy residues 716 to 726, 733 to 763, and 778 to 789; these read RPNSGNKSNQG, PTGS…QRGS, and RGNTQRQPQRAR.

This sequence belongs to the UPF0313 family. [4Fe-4S] cluster is required as a cofactor.

In Vibrio cholerae serotype O1 (strain ATCC 39315 / El Tor Inaba N16961), this protein is UPF0313 protein VC_1711.